Here is a 396-residue protein sequence, read N- to C-terminus: N-acyl-phosphatidylethanolamine-hydrolyzing phospholipase D (396 aa).

An N-acetylmethionine modification is found at methionine 1. 2 stretches are compositionally biased toward polar residues: residues 1 to 12 and 26 to 37; these read MDENENSQSPAP and NSVQNSGGSESS. Positions 1-41 are disordered; sequence MDENENSQSPAPSHQYPKETLRKRQNSVQNSGGSESSRLSR. The Zn(2+) site is built by histidine 185 and histidine 187. Tyrosine 188 provides a ligand contact to an N-acyl-1,2-diacyl-sn-glycero-3-phosphoethanolamine. 3 residues coordinate Zn(2+): aspartate 189, histidine 190, and histidine 253. Residue lysine 256 coordinates deoxycholate. Aspartate 284 is a Zn(2+) binding site. Histidine 321 provides a ligand contact to an N-acyl-1,2-diacyl-sn-glycero-3-phosphoethanolamine. Histidine 343 is a Zn(2+) binding site. Residue alanine 348 coordinates deoxycholate.

This sequence belongs to the NAPE-PLD family. As to quaternary structure, homodimer. Bile acids promote the assembly of inactive monomers into an active dimer and enable catalysis. It depends on Zn(2+) as a cofactor. Widely expressed. Highest expression in brain, kidney and testis (at protein level). Expressed in adipose tissue (at protein level).

The protein localises to the golgi apparatus membrane. It localises to the early endosome membrane. Its subcellular location is the nucleus envelope. It is found in the nucleus. The protein resides in the nucleoplasm. It catalyses the reaction an N-acyl-1,2-diacyl-sn-glycero-3-phosphoethanolamine + H2O = an N-acylethanolamine + a 1,2-diacyl-sn-glycero-3-phosphate + H(+). The catalysed reaction is N-butanoyl-1-hexadecanoyl-2-(9Z,12Z-octadecadienoyl)-sn-glycero-3-phosphoethanolamine + H2O = N-butanoyl ethanolamine + 1-hexadecanoyl-2-(9Z,12Z-octadecadienoyl)-sn-glycero-3-phosphate + H(+). It carries out the reaction N-hexanoyl-1-hexadecanoyl-2-(9Z,12Z-octadecadienoyl)-sn-glycero-3-phosphoethanolamine + H2O = N-hexanoyl ethanolamine + 1-hexadecanoyl-2-(9Z,12Z-octadecadienoyl)-sn-glycero-3-phosphate + H(+). The enzyme catalyses N-octanoyl-1-hexadecanoyl-2-(9Z,12Z-octadecadienoyl)-sn-glycero-3-phosphoethanolamine + H2O = N-octanoyl ethanolamine + 1-hexadecanoyl-2-(9Z,12Z-octadecadienoyl)-sn-glycero-3-phosphate + H(+). It catalyses the reaction N-decanoyl-1-hexadecanoyl-2-(9Z,12Z-octadecadienoyl)-sn-glycero-3-phosphoethanolamine + H2O = N-decanoyl ethanolamine + 1-hexadecanoyl-2-(9Z,12Z-octadecadienoyl)-sn-glycero-3-phosphate + H(+). The catalysed reaction is N-dodecanoyl-1,2-di-(9Z-octadecenoyl)-sn-glycero-3-phosphoethanolamine + H2O = N-dodecanoylethanolamine + 1,2-di-(9Z-octadecenoyl)-sn-glycero-3-phosphate + H(+). It carries out the reaction N-tetradecanoyl-1,2-di-(9Z-octadecenoyl)-sn-glycero-3-phosphoethanolamine + H2O = N-tetradecanoylethanolamine + 1,2-di-(9Z-octadecenoyl)-sn-glycero-3-phosphate + H(+). The enzyme catalyses N-hexadecanoyl-1,2-di-(9Z-octadecenoyl)-sn-glycero-3-phosphoethanolamine + H2O = N-hexadecanoylethanolamine + 1,2-di-(9Z-octadecenoyl)-sn-glycero-3-phosphate + H(+). It catalyses the reaction N,1-dihexadecanoyl-2-(9Z,12Z-octadecadienoyl)-sn-glycero-3-phosphoethanolamine + H2O = 1-hexadecanoyl-2-(9Z,12Z-octadecadienoyl)-sn-glycero-3-phosphate + N-hexadecanoylethanolamine + H(+). The catalysed reaction is N-octadecanoyl-1,2-di-(9Z-octadecenoyl)-sn-glycero-3-phosphoethanolamine + H2O = N-octadecanoyl ethanolamine + 1,2-di-(9Z-octadecenoyl)-sn-glycero-3-phosphate + H(+). It carries out the reaction N,1,2-tri-(9Z-octadecenoyl)-sn-glycero-3-phosphoethanolamine + H2O = N-(9Z-octadecenoyl) ethanolamine + 1,2-di-(9Z-octadecenoyl)-sn-glycero-3-phosphate + H(+). The enzyme catalyses N-(5Z,8Z,11Z,14Z-eicosatetraenoyl)-1,2-diacyl-sn-glycero-3-phosphoethanolamine + H2O = N-(5Z,8Z,11Z,14Z-eicosatetraenoyl)-ethanolamine + a 1,2-diacyl-sn-glycero-3-phosphate + H(+). It catalyses the reaction N-(5Z,8Z,11Z,14Z-eicosatetraenoyl)-1,2-di-(9Z-octadecenoyl)-sn-glycero-3-phosphoethanolamine + H2O = N-(5Z,8Z,11Z,14Z-eicosatetraenoyl)-ethanolamine + 1,2-di-(9Z-octadecenoyl)-sn-glycero-3-phosphate + H(+). The catalysed reaction is 1-O-(1Z-octadecenoyl)-2-(9Z-octadecenoyl)-sn-glycero-3-phospho-N-hexadecanoyl-ethanolamine + H2O = 1-O-(1Z-octadecenoyl)-2-(9Z-octadecenoyl)-sn-glycero-3-phosphate + N-hexadecanoylethanolamine + H(+). It carries out the reaction N,1-diacyl-sn-glycero-3-phosphoethanolamine + H2O = an N-acylethanolamine + a 1-acyl-sn-glycero-3-phosphate + H(+). The enzyme catalyses N,1-dihexadecanoyl-sn-glycero-3-phosphoethanolamine + H2O = N-hexadecanoylethanolamine + 1-hexadecanoyl-sn-glycero-3-phosphate + H(+). It catalyses the reaction N-(5Z,8Z,11Z,14Z-eicosatetraenoyl)-1-(9Z-octadecenoyl)-sn-glycero-3-phosphoethanolamine + H2O = N-(5Z,8Z,11Z,14Z-eicosatetraenoyl)-ethanolamine + 1-(9Z-octadecenoyl)-sn-glycero-3-phosphate + H(+). With respect to regulation, activated by divalent cations. Activated by bile acids. Activated by membrane phospholipids such as phosphatidylethanolamines. Inhibited by cardiolipins. Its function is as follows. D-type phospholipase that hydrolyzes N-acyl-phosphatidylethanolamines (NAPEs) to produce bioactive N-acylethanolamines/fatty acid ethanolamides (NAEs/FAEs) and phosphatidic acid. Cleaves the terminal phosphodiester bond of diacyl- and alkenylacyl-NAPEs, primarily playing a role in the generation of long-chain saturated and monounsaturated NAEs in the brain. May control NAPE homeostasis in dopaminergic neuron membranes and regulate neuron survival, partly through RAC1 activation. As a regulator of lipid metabolism in the adipose tissue, mediates the crosstalk between adipocytes, gut microbiota and immune cells to control body temperature and weight. In particular, regulates energy homeostasis by promoting cold-induced brown or beige adipocyte differentiation program to generate heat from fatty acids and glucose. Has limited D-type phospholipase activity toward N-acyl lyso-NAPEs. The sequence is that of N-acyl-phosphatidylethanolamine-hydrolyzing phospholipase D (Napepld) from Rattus norvegicus (Rat).